We begin with the raw amino-acid sequence, 113 residues long: Large ribosomal subunit protein bL17 (113 aa).

The protein belongs to the bacterial ribosomal protein bL17 family. In terms of assembly, part of the 50S ribosomal subunit. Contacts protein L32.

This is Large ribosomal subunit protein bL17 from Clostridium botulinum (strain ATCC 19397 / Type A).